The chain runs to 71 residues: Protein SlyX homolog (71 aa).

This sequence belongs to the SlyX family.

In Azotobacter vinelandii (strain DJ / ATCC BAA-1303), this protein is Protein SlyX homolog.